Here is a 960-residue protein sequence, read N- to C-terminus: Cyclin-dependent kinase-like 5 (960 aa).

Residues 13-297 (FEILGVVGEG…TEQCLNHPTF (285 aa)) enclose the Protein kinase domain. ATP is bound by residues 19 to 27 (VGEGAYGVV) and Lys42. Residue Asp135 is the Proton acceptor of the active site. Disordered stretches follow at residues 300–349 (QRLL…IQNL), 382–566 (KTYQ…RHSK), 646–834 (SPQP…TQSQ), and 848–960 (ASNH…ETAL). Polar residues-rich tracts occupy residues 319–336 (ESST…TALQ) and 382–402 (KTYQ…NNNI). Phosphoserine is present on Ser407. Positions 407–417 (SPKEAKSKTEF) are enriched in basic and acidic residues. 3 stretches are compositionally biased toward polar residues: residues 434–462 (LKSN…QPNE), 473–482 (IPQSSRSPSY), and 510–548 (EPST…SGRN). Ser479 bears the Phosphoserine mark. 2 stretches are compositionally biased toward basic and acidic residues: residues 549 to 559 (NRNEGTLDSRR) and 679 to 704 (QKSE…RHLY). Phosphoserine is present on Ser720. Polar residues predominate over residues 728 to 748 (HENNVSTRVSSLPSESSSGTN). The residue at position 761 (Ser761) is a Phosphoserine. Basic and acidic residues predominate over residues 769–778 (EQLKEKEKQG). Over residues 791-816 (QTVPNSDSPDLLTLQKSIHSASTPSS) the composition is skewed to polar residues. Residues 817–827 (RPKEWRPEKIS) show a composition bias toward basic and acidic residues. Composition is skewed to polar residues over residues 862–872 (LTAQQTKNSFS), 880–890 (SQASGGSSNIR), and 914–928 (SSVT…SYSE).

Belongs to the protein kinase superfamily. CMGC Ser/Thr protein kinase family. CDC2/CDKX subfamily. As to quaternary structure, interacts with MECP2. Post-translationally, autophosphorylated. Expressed in brain, lung, kidney, prostate, ovary, placenta, pancreas and testis. In terms of tissue distribution, predominant transcript in brain.

It is found in the nucleus. It localises to the cytoplasm. Its subcellular location is the cytoskeleton. The protein resides in the cilium basal body. The protein localises to the microtubule organizing center. It is found in the centrosome. It carries out the reaction L-seryl-[protein] + ATP = O-phospho-L-seryl-[protein] + ADP + H(+). It catalyses the reaction L-threonyl-[protein] + ATP = O-phospho-L-threonyl-[protein] + ADP + H(+). Mediates phosphorylation of MECP2. May regulate ciliogenesis. This is Cyclin-dependent kinase-like 5 from Homo sapiens (Human).